Reading from the N-terminus, the 58-residue chain is Probable U-exon protein (58 aa).

This Snake adenovirus serotype 1 (SnAdV-1) protein is Probable U-exon protein.